Consider the following 1037-residue polypeptide: Ribonuclease E (1037 aa).

3 disordered regions span residues 1-23 (MAED…LPER), 47-90 (FDGR…ETPV), and 106-369 (VSEA…PILS). Residues 47–67 (FDGRQRSAHSTVDKADAERVR) are compositionally biased toward basic and acidic residues. Low complexity-rich tracts occupy residues 68 to 90 (AALT…ETPV) and 106 to 126 (VSEA…PAAE). Composition is skewed to acidic residues over residues 127–141 (AEAE…EAET) and 196–226 (VVDD…DDDQ). Over residues 230–242 (PRRRRRGRRGRGR) the composition is skewed to basic residues. The span at 248 to 284 (NDDATSDADTDSTEDQTDGDEQESGEDSDDSGDEDST) shows a compositional bias: acidic residues. Basic residues predominate over residues 291–301 (RRRRRRRRRKS). Positions 320–335 (VHERAPRTERSDKSDD) are enriched in basic and acidic residues. The 78-residue stretch at 427–504 (GNIYLGIVQN…GHKGARLTTQ (78 aa)) folds into the S1 motif domain. Residues 561–589 (EDIRSDVERLQKRWSEIEAKAAEVTEKKA) are a coiled coil. Residues Asp694 and Asp738 each coordinate Mg(2+). Zn(2+)-binding residues include Cys796 and Cys799. A disordered region spans residues 810 to 1037 (PIDSASSNGG…ARPAGPPSHD (228 aa)). Basic residues predominate over residues 834–843 (RRGKRGKKGA). The segment covering 844–864 (ARTEEVHVAKVPDHTPGEHPM) has biased composition (basic and acidic residues). A compositionally biased stretch (acidic residues) spans 879–891 (EDHEDHEDHETAE). The segment covering 897–913 (EVRDDTRDEHDADERAH) has biased composition (basic and acidic residues). Over residues 923–1006 (GDEDLDDSDE…DSDSDEDEEP (84 aa)) the composition is skewed to acidic residues.

It belongs to the RNase E/G family. Assembles into a homotetramer formed by a dimer of dimers. Interacts with DNA-binding protein HhupB. Requires Mg(2+) as cofactor. Zn(2+) serves as cofactor.

The protein localises to the cytoplasm. It catalyses the reaction Endonucleolytic cleavage of single-stranded RNA in A- and U-rich regions.. In terms of biological role, endoribonuclease that plays a central role in RNA processing and decay. Plays a major role in pre-16S rRNA maturation, probably generating the mature 5'-end, and a minor role in pre-5S and pre-23S rRNA maturation. Probably also processes tRNA. RNase E and HupB jointly contribute to cellular adaptation to changing growth conditions and survival during antibiotic treatment. Overexpression or depletion leads to changes in gene expression; overexpression induces metabolic slowdown and cell stress while depleted strains grow less well than induced strains. In Mycolicibacterium smegmatis (strain ATCC 700084 / mc(2)155) (Mycobacterium smegmatis), this protein is Ribonuclease E (rne).